The following is a 334-amino-acid chain: Syntaxin-18 (334 aa).

The Cytoplasmic portion of the chain corresponds to 1 to 308 (MAVDITLLFR…EDIREAIKNN (308 aa)). Disordered regions lie at residues 29–50 (GGAD…GDFS) and 166–225 (LSKL…GEDE). Basic and acidic residues-rich tracts occupy residues 33-50 (GSRD…GDFS) and 166-182 (LSKL…DSTS). Polar residues predominate over residues 183–192 (EKAPQNASQD). Residues 193 to 207 (SEGKPAAEELPEKPL) are compositionally biased toward basic and acidic residues. Residues 242–304 (IGEMNSLFDE…KEGNEDIREA (63 aa)) form the t-SNARE coiled-coil homology domain. A helical; Anchor for type IV membrane protein membrane pass occupies residues 309–329 (AGFRVWILFFLVMCSFSLLFL). Residues 330–334 (DWYDS) lie on the Lumenal side of the membrane.

It belongs to the syntaxin family. In terms of assembly, component of a SNARE complex consisting of STX18, USE1L, BNIP1/SEC20L, and SEC22B. RINT1/TIP20L and ZW10 are associated with the complex through interaction with BNIP1/SEC20L. Interacts directly with USE1L and BNIP1/SEC20L.

Its subcellular location is the endoplasmic reticulum membrane. It localises to the golgi apparatus membrane. Functionally, syntaxin that may be involved in targeting and fusion of Golgi-derived retrograde transport vesicles with the ER. The chain is Syntaxin-18 (Stx18) from Mus musculus (Mouse).